Consider the following 361-residue polypeptide: Phospho-N-acetylmuramoyl-pentapeptide-transferase (361 aa).

Helical transmembrane passes span 26-46, 71-91, 97-117, 134-154, 168-188, 200-220, 236-256, 264-284, 290-310, and 338-358; these read AGGAILTSLLICFVAGPCIIE, TPTMGGLLILLSVVASTFLWA, FILWLLTGTLWLGFLGFCDDY, IFGQTVFAAVLAAYLNFFPSN, GFFINFSFLYALFVIIVIVGS, GLAIGNITIVAFSLTLFAYFA, GAGEISIFLFAVVGSSLGFLW, IFMGDTGSLFLGGVLGMVSLF, VLVLLGGVFVIEALSVLIQIF, and KVTVRFWIAGVILAILSFASL.

This sequence belongs to the glycosyltransferase 4 family. MraY subfamily. Requires Mg(2+) as cofactor.

The protein localises to the cell membrane. The catalysed reaction is UDP-N-acetyl-alpha-D-muramoyl-L-alanyl-gamma-D-glutamyl-meso-2,6-diaminopimeloyl-D-alanyl-D-alanine + di-trans,octa-cis-undecaprenyl phosphate = di-trans,octa-cis-undecaprenyl diphospho-N-acetyl-alpha-D-muramoyl-L-alanyl-D-glutamyl-meso-2,6-diaminopimeloyl-D-alanyl-D-alanine + UMP. Its pathway is cell wall biogenesis; peptidoglycan biosynthesis. Its function is as follows. Catalyzes the initial step of the lipid cycle reactions in the biosynthesis of the cell wall peptidoglycan: transfers peptidoglycan precursor phospho-MurNAc-pentapeptide from UDP-MurNAc-pentapeptide onto the lipid carrier undecaprenyl phosphate, yielding undecaprenyl-pyrophosphoryl-MurNAc-pentapeptide, known as lipid I. The sequence is that of Phospho-N-acetylmuramoyl-pentapeptide-transferase from Endomicrobium trichonymphae.